Consider the following 142-residue polypeptide: Dromaiocalcin-2 (142 aa).

3 cysteine pairs are disulfide-bonded: C6–C17, C34–C138, and C113–C130. Residues 13–139 (FDGRCYGFFP…CSDRKPFICA (127 aa)) form the C-type lectin domain. A phosphoserine mark is found at S62 and S68.

Post-translationally, a minor form with some unmodified Ser-68 and partial phosphorylation of Ser-66 may also occur.

The protein resides in the secreted. It localises to the extracellular space. Its subcellular location is the extracellular matrix. The sequence is that of Dromaiocalcin-2 from Dromaius novaehollandiae (Emu).